A 586-amino-acid polypeptide reads, in one-letter code: Arginine--tRNA ligase (586 aa).

The short motif at 130 to 140 (ANPTGPMHVGH) is the 'HIGH' region element.

The protein belongs to the class-I aminoacyl-tRNA synthetase family. As to quaternary structure, monomer.

The protein resides in the cytoplasm. It carries out the reaction tRNA(Arg) + L-arginine + ATP = L-arginyl-tRNA(Arg) + AMP + diphosphate. This is Arginine--tRNA ligase from Methylobacterium sp. (strain 4-46).